A 462-amino-acid chain; its full sequence is Sensor histidine kinase ZraS (462 aa).

Residues 1-14 are Cytoplasmic-facing; that stretch reads MNVMRLSKDSVAVG. The helical transmembrane segment at 15–35 threads the bilayer; sequence LSWLLTGLILLLVCLFSALIV. The Periplasmic segment spans residues 36 to 197; that stretch reads RDYGRENEAA…ADHARGLRNM (162 aa). The helical transmembrane segment at 198-218 threads the bilayer; sequence VIMLCAAGVVMAATVLAQFWF. The Cytoplasmic portion of the chain corresponds to 219–462; sequence RRYQRSRKQL…VNGQQKDEQG (244 aa). Residues 247 to 455 enclose the Histidine kinase domain; that stretch reads GVAHEIRNPL…LFTFYLPVNG (209 aa). His-250 is modified (phosphohistidine; by autocatalysis).

Autophosphorylated.

The protein localises to the cell inner membrane. The enzyme catalyses ATP + protein L-histidine = ADP + protein N-phospho-L-histidine.. Its activity is regulated as follows. Activity of the ZraS/ZraR two-component system is repressed by the zinc-bound form of ZraP, which probably interacts with the periplasmic region of ZraS. Part of the Zra signaling pathway, an envelope stress response (ESR) system composed of the periplasmic accessory protein ZraP, the histidine kinase ZraS and the transcriptional regulator ZraR. The ZraPSR system contributes to antibiotic resistance and is important for membrane integrity in the presence of membrane-targeting biocides. ZraS is a member of the two-component regulatory system ZraS/ZraR. Functions as a membrane-associated sensor kinase that phosphorylates ZraR in response to high concentrations of Zn(2+) or Pb(2+) in the medium. This is Sensor histidine kinase ZraS (zraS) from Klebsiella oxytoca.